The chain runs to 176 residues: NADH:riboflavin 5'-phosphate oxidoreductase (176 aa).

Provides the reduced form of flavin mononucleotide for the PIIA synthase reaction. The chain is NADH:riboflavin 5'-phosphate oxidoreductase (snaC) from Streptomyces pristinaespiralis.